We begin with the raw amino-acid sequence, 451 residues long: Scaffold protein ILK (451 aa).

M1 carries the N-acetylmethionine modification. ANK repeat units follow at residues 2 to 30, 31 to 63, 64 to 96, 97 to 129, and 130 to 174; these read DDIF…LNQG, DDHG…INVM, NRGD…INAV, NEHG…VSIC, and NKYG…GTTR. Residues 33–139 are interaction with LIMS1; it reads HGFSPLHWAC…NKYGEMPMDK (107 aa). The residue at position 173 (T173) is a Phosphothreonine. The segment at 180 to 212 is PH-like; mediates interaction with TGFB1I1; sequence GTLNKHSGIDFKQLNFLAKLNENHSGELWKGRW. A Phosphoserine modification is found at S186. A Protein kinase domain is found at 193–445; that stretch reads LNFLAKLNEN…PKFDMIVPIL (253 aa). Residues N200, N202, H203, and S204 each coordinate ATP. S246 is modified (phosphoserine). Positions 270, 272, and 279 each coordinate ATP. D339 lines the Mg(2+) pocket. Residue K341 coordinates ATP. A Nuclear localization signal motif is present at residues 363-371; it reads KKPEDTNRR. An N6-acetyllysine modification is found at K425.

This sequence belongs to the protein kinase superfamily. TKL Ser/Thr protein kinase family. In terms of assembly, component of the heterotrimeric IPP (ILK-PINCH-PARVIN) complex composed of ILK, LIMS1/PINCH and PARVA; the complex binds to F-actin via the C-terminal tail of LIMS1 and the N-terminal region of PARVA, promoting F-actin filament bundling. Formation of the IPP complex is dependent on protein kinase C and precedes integrin-mediated cell adhesion and spreading. ILK also interacts with LIMS2/PINCH2 and with PARVB and PARVG which may substitute for LIMS1 and PARVA in the IPP complex; PARVA and PARVB compete for the same binding site. Interaction with PARVG promotes the establishment of cell polarity required for leukocyte migration. Interacts with the cytoplasmic domain of integrin ITGB1 and may also interact with integrins ITGB2, ITGB3 and/or ITGB5. Interacts probably also with TGFB1I1. Interacts (via ANK repeats) with EPHA1 (via SAM domain); stimulated by EFNA1 but independent of the kinase activity of EPHA1. Interacts with FERMT2. Interacts with LIMD2; leading to activate the protein kinase activity. Interacts with PXN/PAXILLIN (via LD motif 4). Interacts with CCDC25 (via cytoplasmic region); initiating the ILK-PARVB cascade to induce cytoskeleton rearrangement and directional migration of cells. Interacts with IQGAP1; the interaction is required for localization of IQGAP1 to the cell cortex. Phosphorylation by PAK1 modulates ILK subcellular location by promoting its nuclear export.

It localises to the cell junction. It is found in the focal adhesion. The protein localises to the cell membrane. Its subcellular location is the cell projection. The protein resides in the lamellipodium. It localises to the cytoplasm. It is found in the myofibril. The protein localises to the sarcomere. Its subcellular location is the nucleus. The protein resides in the cytoskeleton. It localises to the microtubule organizing center. It is found in the centrosome. The protein localises to the cell cortex. Functionally, scaffold protein which mediates protein-protein interactions during a range of cellular events including focal adhesion assembly, cell adhesion and cell migration. Regulates integrin-mediated signal transduction by contributing to inside-out integrin activation. Recruits PARVA and LIMS1/PITCH to form the heterotrimeric IPP (ILK-PINCH-PARVIN) complex which binds to F-actin via the C-terminal tail of LIMS1 and the N-terminal region of PARVA, promoting F-actin filament bundling, a process required to generate force for actin cytoskeleton reorganization and subsequent dynamic cell adhesion events such as cell spreading and migration. Binding to PARVA promotes effective assembly of ILK into focal adhesions while PARVA-bound ILK can simultaneously engage integrin-beta cytoplasmic tails to mediate cell adhesion. Plays a role with PARVG in promoting the cell adhesion and spreading of leukocytes. Acts as an upstream effector of both AKT1/PKB and GSK3. Mediates trafficking of caveolae to the cell surface in an ITGB1-dependent manner by promoting the recruitment of IQGAP1 to the cell cortex which cooperates with its effector DIAPH1 to locally stabilize microtubules and allow stable insertion of caveolae into the plasma membrane. Required for the maintenance of mitotic spindle integrity by promoting phosphorylation of TACC3 by AURKA. Associates with chromatin and may act as a negative regulator of transcription when located in the nucleus. The protein is Scaffold protein ILK of Cavia porcellus (Guinea pig).